Here is a 185-residue protein sequence, read N- to C-terminus: PXMP2/4 family protein 4 (185 aa).

A run of 3 helical transmembrane segments spans residues methionine 63–aspartate 83, isoleucine 100–leucine 120, and valine 141–isoleucine 161.

The protein belongs to the peroxisomal membrane protein PXMP2/4 family.

The protein localises to the membrane. The polypeptide is PXMP2/4 family protein 4 (Dictyostelium discoideum (Social amoeba)).